The sequence spans 341 residues: Killer cell immunoglobulin-like receptor 2DL3 (341 aa).

An N-terminal signal peptide occupies residues 1-21 (MSLMVVSMVCVGFFLLQGAWP). Over 22–245 (HEGVHRKPSL…SETGNPRHLH (224 aa)) the chain is Extracellular. Ig-like C2-type domains lie at 42–107 (EETV…VTHS) and 142–205 (GESV…FRDS). 2 disulfide bridges follow: C49-C100 and C149-C198. N-linked (GlcNAc...) asparagine glycans are attached at residues N84, N178, and N211. The segment at 220-239 (VTGNPSNSWPSPTEPSSETG) is disordered. A compositionally biased stretch (low complexity) spans 223–239 (NPSNSWPSPTEPSSETG). The chain crosses the membrane as a helical span at residues 246-265 (VLIGTSVVIILFILLLFFLL). Residues 266 to 341 (HRWCCNKKNA…VYTELPNAEP (76 aa)) are Cytoplasmic-facing.

It belongs to the immunoglobulin superfamily. In terms of assembly, interacts with ARRB2.

It is found in the cell membrane. In terms of biological role, receptor on natural killer (NK) cells for HLA-C alleles (HLA-Cw1, HLA-Cw3 and HLA-Cw7). Inhibits the activity of NK cells thus preventing cell lysis. The chain is Killer cell immunoglobulin-like receptor 2DL3 from Homo sapiens (Human).